The following is a 335-amino-acid chain: Dolichyl-diphosphooligosaccharide--protein glycosyltransferase subunit MAGT1 (335 aa).

Residues 1 to 29 (MAAGWWFWCVSVTVAVALLIVCDVPSVSA) form the signal peptide. The Extracellular segment spans residues 30–184 (QRKKEMVLSE…DVNIRVIRPP (155 aa)). The region spanning 47 to 175 (WTNKRPVIRM…IARWIADRTD (129 aa)) is the Thioredoxin domain. Residue Asn-71 is glycosylated (N-linked (GlcNAc...) asparagine). Cys-87 and Cys-90 are disulfide-bonded. A helical membrane pass occupies residues 185 to 205 (NYAGPLMLGLLLAVIGGLVYL). Residues 206 to 209 (RRSN) are Cytoplasmic-facing. Residues 210-230 (MEFLFNKTGWAFAALCFVLAM) traverse the membrane as a helical segment. Residues 231 to 270 (TSGQMWNHIRGPPYAHKNPHTGHVNYIHGSSQAQFVAETH) are Extracellular-facing. A helical transmembrane segment spans residues 271-291 (IVLLFNGGVTLGMVLLCEAAT). Residues 292-300 (SDMDIGKRK) are Cytoplasmic-facing. Residues 301-321 (IMCVAGIGLVVLFFSWMLSIF) form a helical membrane-spanning segment. Topologically, residues 322–335 (RSKYHGYPYSFLMS) are extracellular.

It belongs to the OST3/OST6 family. In terms of assembly, accessory component of the STT3B-containing form of the oligosaccharyltransferase (OST) complex. OST exists in two different complex forms which contain common core subunits RPN1, RPN2, OST48, OST4, DAD1 and TMEM258, either STT3A or STT3B as catalytic subunits, and form-specific accessory subunits. OST can form stable complexes with the Sec61 complex or with both the Sec61 and TRAP complexes. The association of TUSC3 or MAGT1 with the STT3B-containing complex seems to be mutually exclusvice.

Its subcellular location is the cell membrane. The protein resides in the endoplasmic reticulum. The protein localises to the endoplasmic reticulum membrane. The protein operates within protein modification; protein glycosylation. Functionally, accessory component of the STT3B-containing form of the N-oligosaccharyl transferase (OST) complex which catalyzes the transfer of a high mannose oligosaccharide from a lipid-linked oligosaccharide donor to an asparagine residue within an Asn-X-Ser/Thr consensus motif in nascent polypeptide chains. Involved in N-glycosylation of STT3B-dependent substrates. Specifically required for the glycosylation of a subset of acceptor sites that are near cysteine residues; in this function seems to act redundantly with TUSC3. In its oxidized form proposed to form transient mixed disulfides with a glycoprotein substrate to facilitate access of STT3B to the unmodified acceptor site. Also has oxidoreductase-independent functions in the STT3B-containing OST complex possibly involving substrate recognition. Could indirectly play a role in Mg(2+) transport in epithelial cells. The polypeptide is Dolichyl-diphosphooligosaccharide--protein glycosyltransferase subunit MAGT1 (Pongo abelii (Sumatran orangutan)).